The chain runs to 140 residues: Large ribosomal subunit protein bL17 (140 aa).

This sequence belongs to the bacterial ribosomal protein bL17 family. In terms of assembly, part of the 50S ribosomal subunit. Contacts protein L32.

In Rhizobium etli (strain ATCC 51251 / DSM 11541 / JCM 21823 / NBRC 15573 / CFN 42), this protein is Large ribosomal subunit protein bL17.